The following is a 239-amino-acid chain: Protein canopy homolog 4 (239 aa).

Residues 1-20 form the signal peptide; sequence MGPVRLGTLLFILTVYGAWA. 3 disulfide bridges follow: Cys-37-Cys-195, Cys-40-Cys-183, and Cys-93-Cys-155. The interval 199–239 is disordered; sequence TWTGKEKITDGQEKTEEEEQDQEEEEMTNTPVHSQHDPEDL. Over residues 201–212 the composition is skewed to basic and acidic residues; sequence TGKEKITDGQEK. Positions 213–225 are enriched in acidic residues; the sequence is TEEEEQDQEEEEM.

Belongs to the canopy family. Interacts with TLR4.

It localises to the secreted. In terms of biological role, plays a role in the regulation of the cell surface expression of TLR4. The polypeptide is Protein canopy homolog 4 (CNPY4) (Bos taurus (Bovine)).